A 52-amino-acid chain; its full sequence is ATP synthase F(0) complex subunit 8 (52 aa).

The chain crosses the membrane as a helical span at residues 10–30 (LMTHLWAWLMLYLTTQKIKTF).

This sequence belongs to the ATPase protein 8 family. As to quaternary structure, component of the ATP synthase complex composed at least of ATP5F1A/subunit alpha, ATP5F1B/subunit beta, ATP5MC1/subunit c (homooctomer), MT-ATP6/subunit a, MT-ATP8/subunit 8, ATP5ME/subunit e, ATP5MF/subunit f, ATP5MG/subunit g, ATP5MK/subunit k, ATP5MJ/subunit j, ATP5F1C/subunit gamma, ATP5F1D/subunit delta, ATP5F1E/subunit epsilon, ATP5PF/subunit F6, ATP5PB/subunit b, ATP5PD/subunit d, ATP5PO/subunit OSCP. ATP synthase complex consists of a soluble F(1) head domain (subunits alpha(3) and beta(3)) - the catalytic core - and a membrane F(0) domain - the membrane proton channel (subunits c, a, 8, e, f, g, k and j). These two domains are linked by a central stalk (subunits gamma, delta, and epsilon) rotating inside the F1 region and a stationary peripheral stalk (subunits F6, b, d, and OSCP).

It localises to the mitochondrion membrane. In terms of biological role, subunit 8, of the mitochondrial membrane ATP synthase complex (F(1)F(0) ATP synthase or Complex V) that produces ATP from ADP in the presence of a proton gradient across the membrane which is generated by electron transport complexes of the respiratory chain. ATP synthase complex consist of a soluble F(1) head domain - the catalytic core - and a membrane F(1) domain - the membrane proton channel. These two domains are linked by a central stalk rotating inside the F(1) region and a stationary peripheral stalk. During catalysis, ATP synthesis in the catalytic domain of F(1) is coupled via a rotary mechanism of the central stalk subunits to proton translocation. In vivo, can only synthesize ATP although its ATP hydrolase activity can be activated artificially in vitro. Part of the complex F(0) domain. This Lycodon semicarinatus (Ryukyu odd-tooth snake) protein is ATP synthase F(0) complex subunit 8.